A 130-amino-acid chain; its full sequence is Small ribosomal subunit protein uS9 (130 aa).

Positions 105-130 (TRDSRMKERKKPGLRGARRAPQFSKR) are disordered. A compositionally biased stretch (basic residues) spans 111–130 (KERKKPGLRGARRAPQFSKR).

This sequence belongs to the universal ribosomal protein uS9 family.

This chain is Small ribosomal subunit protein uS9, found in Lysinibacillus sphaericus (strain C3-41).